The primary structure comprises 153 residues: Transcriptional repressor NrdR (153 aa).

A zinc finger lies at 3–34 (CPSCFHNGTRVLDSRPVDEGRSIRRRRECESC). The ATP-cone domain maps to 49-139 (LIVVKKEGTR…VYRQFKDLNV (91 aa)).

Belongs to the NrdR family. The cofactor is Zn(2+).

Negatively regulates transcription of bacterial ribonucleotide reductase nrd genes and operons by binding to NrdR-boxes. The sequence is that of Transcriptional repressor NrdR from Bacillus mycoides (strain KBAB4) (Bacillus weihenstephanensis).